The chain runs to 260 residues: MYIEKIRKVKPLIHHITNYVTVNDCANASIAIGASPIMADFIQEQEEFSKICNCLVLNTGTINERVANSMYESAKFYGNLNKAIVLDPVALGVSMARDAINLKLLNSYKISIIKANASEIASVIGLDGKAKGTDNTFVVNDHFLDKACEYAKGHNRILVVSGEVDFIISSEKIAKIYNGSIMATKITGAGCMCASMCGVFAGVIEDKFQASLQAMLSFDIACEMAEEISNGSGSFRVNLIDALSNLNDEDVKKRAKYEII.

Methionine 38 provides a ligand contact to substrate. Residues lysine 114 and serine 161 each coordinate ATP. Residue glycine 188 participates in substrate binding.

This sequence belongs to the Thz kinase family. The cofactor is Mg(2+).

It carries out the reaction 5-(2-hydroxyethyl)-4-methylthiazole + ATP = 4-methyl-5-(2-phosphooxyethyl)-thiazole + ADP + H(+). Its pathway is cofactor biosynthesis; thiamine diphosphate biosynthesis; 4-methyl-5-(2-phosphoethyl)-thiazole from 5-(2-hydroxyethyl)-4-methylthiazole: step 1/1. Its function is as follows. Catalyzes the phosphorylation of the hydroxyl group of 4-methyl-5-beta-hydroxyethylthiazole (THZ). This Campylobacter lari (strain RM2100 / D67 / ATCC BAA-1060) protein is Hydroxyethylthiazole kinase.